The following is a 231-amino-acid chain: Fibrillarin-like rRNA/tRNA 2'-O-methyltransferase (231 aa).

S-adenosyl-L-methionine-binding positions include 88 to 89, 106 to 107, 131 to 132, and 151 to 154; these read TT, EF, DA, and DVAQ.

Belongs to the methyltransferase superfamily. Fibrillarin family. In terms of assembly, interacts with nop5. Component of box C/D small ribonucleoprotein (sRNP) particles that contain rpl7ae, FlpA and nop5, plus a guide RNA.

Involved in pre-rRNA and tRNA processing. Utilizes the methyl donor S-adenosyl-L-methionine to catalyze the site-specific 2'-hydroxyl methylation of ribose moieties in rRNA and tRNA. Site specificity is provided by a guide RNA that base pairs with the substrate. Methylation occurs at a characteristic distance from the sequence involved in base pairing with the guide RNA. The polypeptide is Fibrillarin-like rRNA/tRNA 2'-O-methyltransferase (Methanococcus aeolicus (strain ATCC BAA-1280 / DSM 17508 / OCM 812 / Nankai-3)).